The sequence spans 202 residues: 3-isopropylmalate dehydratase small subunit (202 aa).

It belongs to the LeuD family. LeuD type 1 subfamily. Heterodimer of LeuC and LeuD.

It catalyses the reaction (2R,3S)-3-isopropylmalate = (2S)-2-isopropylmalate. The protein operates within amino-acid biosynthesis; L-leucine biosynthesis; L-leucine from 3-methyl-2-oxobutanoate: step 2/4. Its function is as follows. Catalyzes the isomerization between 2-isopropylmalate and 3-isopropylmalate, via the formation of 2-isopropylmaleate. This chain is 3-isopropylmalate dehydratase small subunit, found in Novosphingobium aromaticivorans (strain ATCC 700278 / DSM 12444 / CCUG 56034 / CIP 105152 / NBRC 16084 / F199).